Reading from the N-terminus, the 105-residue chain is uncharacterized protein (105 aa).

The disordered stretch occupies residues 22–105 (GSAGHGATEA…KKRIIKGKVM (84 aa)). The span at 61–83 (HDSRPARGDARKRHCQENNKTDR) shows a compositional bias: basic and acidic residues. Over residues 93–105 (NRRKKRIIKGKVM) the composition is skewed to basic residues.

This is an uncharacterized protein from Escherichia coli (strain K12).